The primary structure comprises 101 residues: Large ribosomal subunit protein uL6m (101 aa).

The protein belongs to the universal ribosomal protein uL6 family.

It localises to the mitochondrion. This Marchantia polymorpha (Common liverwort) protein is Large ribosomal subunit protein uL6m (RPL6).